The chain runs to 78 residues: Large ribosomal subunit protein bL28 (78 aa).

The disordered stretch occupies residues 1-23 (MSRVCQVSGKRVQTGNNVSHANN). A compositionally biased stretch (polar residues) spans 11 to 22 (RVQTGNNVSHAN).

Belongs to the bacterial ribosomal protein bL28 family.

The protein is Large ribosomal subunit protein bL28 of Stenotrophomonas maltophilia (strain R551-3).